The chain runs to 496 residues: MADESETAVKPPAPPLPQMMEGNGNGHEHCSDCENEEDNSYNRGGLSPANDTGAKKKKKKQKKKKEKGSETDSAQDQPVKMNSLPAERIQEIQKAIELFSVGQGPAKTMEEASKRSYQFWDTQPVPKLGEVVNTHGPVEPDKDNIRQEPYTLPQGSTWDALDLGDRGVLKELYTLLNENYVEDDDNMFRFDYSPEFLLWALRPPGWLPQWHCGVRVVSSRKLVGFISAIPANIHIYDTEKKMVEINFLCVHKKLRSKRVAPVLIREITRRIHLEGVFQAVYTAGVVLPKPVGTCRYWHRSLNPRKLIEVKFSHLSRNMTMQRTMKLYRLPETPKTAGLRPMETKDIPVVHQLLTRYLKQFHLTPVMSQEEVEHWFYPQENIIDTFVVENANGEVTDFLSFYTLPSTIMNHPTHKSLKAAYSFYNVHTQTPLLDLMSDALVLAKMKGFDVFNALDLMENKTFLEKLKFGIGDGNLQYYLYNWKCPSMGAEKVGLVLQ.

The interval 1 to 82 is disordered; the sequence is MADESETAVK…SAQDQPVKMN (82 aa). Serine 31 and serine 47 each carry phosphoserine. Residues 55–66 show a composition bias toward basic residues; that stretch reads KKKKKKQKKKKE. Phosphoserine is present on serine 83. 11 residues coordinate tetradecanoyl-CoA: glutamine 118, phenylalanine 119, tryptophan 120, phenylalanine 247, leucine 248, cysteine 249, valine 250, serine 256, arginine 258, valine 259, and alanine 260.

It belongs to the NMT family.

The protein localises to the cytoplasm. It localises to the cytosol. Its subcellular location is the membrane. It carries out the reaction N-terminal glycyl-[protein] + tetradecanoyl-CoA = N-tetradecanoylglycyl-[protein] + CoA + H(+). The catalysed reaction is N-terminal glycyl-L-lysyl-[protein] + tetradecanoyl-CoA = N-terminal glycyl-(N(6)-tetradecanoyl)-L-lysyl-[protein] + CoA + H(+). In terms of biological role, adds a myristoyl group to the N-terminal glycine residue of certain cellular and viral proteins. Also able to mediate N-terminal lysine myristoylation of proteins: catalyzes myristoylation of ARF6 on both 'Gly-2' and 'Lys-3'. Lysine myristoylation is required to maintain ARF6 on membranes during the GTPase cycle. The protein is Glycylpeptide N-tetradecanoyltransferase 1 (NMT1) of Pongo abelii (Sumatran orangutan).